A 208-amino-acid chain; its full sequence is NAD(P)H dehydrogenase (quinone) (208 aa).

The Flavodoxin-like domain occupies 4 to 192 (VLVLYYSSYG…DGARFQGRHV (189 aa)). FMN is bound by residues 10 to 15 (SSYGHV) and 78 to 80 (TRF). Tyr12 serves as a coordination point for NAD(+). Position 98 (Trp98) interacts with substrate. Residues 113–119 (STGSQHG) and His134 each bind FMN. Residues 161–183 (YGASTLADDGDGGDRQPSANELD) are disordered.

It belongs to the WrbA family. FMN is required as a cofactor.

The enzyme catalyses a quinone + NADH + H(+) = a quinol + NAD(+). It carries out the reaction a quinone + NADPH + H(+) = a quinol + NADP(+). This is NAD(P)H dehydrogenase (quinone) from Paracoccus denitrificans (strain Pd 1222).